The sequence spans 1025 residues: Multidrug resistance protein MdtC (1025 aa).

Helical transmembrane passes span 3–23 (FFALFIYRPVATILLSVAITL), 333–353 (EVEQTLIISVALVILVVFLFL), 360–380 (IIPAVAVPVSLIGTFAAMYLC), 387–407 (LSLMALTIATGFVVDDAIVVL), 431–451 (VGFTVLSMSLSLVAVFLPLLL), 463–483 (FAVTLSVAIGISLLVSLTLTP), 528–548 (LVGVVLLGTIALNIWLYISIP), 853–873 (VILIIAAIATVYIVLGILYES), 875–895 (VHPLTILSTLPSAGVGALLAL), 897–917 (LFNAPFSLIALIGIMLLIGIV), 953–973 (PIMMTTLAALFGALPLVLSGG), and 984–1004 (ITIVGGLVMSQLLTLYTTPVV).

It belongs to the resistance-nodulation-cell division (RND) (TC 2.A.6) family. MdtC subfamily. In terms of assembly, part of a tripartite efflux system composed of MdtA, MdtB and MdtC. MdtC forms a heteromultimer with MdtB.

Its subcellular location is the cell inner membrane. Its function is as follows. The MdtABC tripartite complex confers resistance against novobiocin and deoxycholate. The chain is Multidrug resistance protein MdtC from Escherichia fergusonii (strain ATCC 35469 / DSM 13698 / CCUG 18766 / IAM 14443 / JCM 21226 / LMG 7866 / NBRC 102419 / NCTC 12128 / CDC 0568-73).